A 234-amino-acid polypeptide reads, in one-letter code: tRNA1(Val) (adenine(37)-N6)-methyltransferase (234 aa).

The protein belongs to the methyltransferase superfamily. tRNA (adenine-N(6)-)-methyltransferase family.

The protein localises to the cytoplasm. It catalyses the reaction adenosine(37) in tRNA1(Val) + S-adenosyl-L-methionine = N(6)-methyladenosine(37) in tRNA1(Val) + S-adenosyl-L-homocysteine + H(+). Functionally, specifically methylates the adenine in position 37 of tRNA(1)(Val) (anticodon cmo5UAC). This chain is tRNA1(Val) (adenine(37)-N6)-methyltransferase, found in Pedobacter heparinus (strain ATCC 13125 / DSM 2366 / CIP 104194 / JCM 7457 / NBRC 12017 / NCIMB 9290 / NRRL B-14731 / HIM 762-3).